The primary structure comprises 199 residues: Phosphatidylethanolamine N-methyltransferase (199 aa).

Topologically, residues 1–12 (MSWLLGYMDPTE) are lumenal. The helical intramembrane region spans 13–33 (PSFVAAVITIVFNPLFWNVVA). Residues 34-45 (RWEQRTRKLSRA) lie on the Lumenal side of the membrane. A helical membrane pass occupies residues 46–66 (FGSPHLACYSLGICILLLNIL). The Cytoplasmic segment spans residues 67–93 (RSHCFTQAMMSQPKMEGLDNHTTYFLG). A helical transmembrane segment spans residues 94–114 (LAFLGWGFVFVLSSFYALGFT). 98–100 (GWG) is a binding site for S-adenosyl-L-methionine. Residues 115 to 157 (GTFLGDYFGILKESRVTTFPFSVLDNPMYWGSTANYLGWALMH) lie on the Lumenal side of the membrane. The chain crosses the membrane as a helical span at residues 158 to 178 (ASPTGLLLTVLVAIVYVVALL). The Cytoplasmic portion of the chain corresponds to 179 to 199 (YEEPFTAEIYRQKATRLHKRS). 180-181 (EE) is a binding site for S-adenosyl-L-methionine.

This sequence belongs to the class VI-like SAM-binding methyltransferase superfamily. PEMT/PEM2 methyltransferase family. Expressed in liver (at protein level).

Its subcellular location is the endoplasmic reticulum membrane. The protein resides in the mitochondrion membrane. The enzyme catalyses a 1,2-diacyl-sn-glycero-3-phospho-N-methylethanolamine + S-adenosyl-L-methionine = a 1,2-diacyl-sn-glycero-3-phospho-N,N-dimethylethanolamine + S-adenosyl-L-homocysteine + H(+). It catalyses the reaction a 1,2-diacyl-sn-glycero-3-phospho-N,N-dimethylethanolamine + S-adenosyl-L-methionine = a 1,2-diacyl-sn-glycero-3-phosphocholine + S-adenosyl-L-homocysteine + H(+). The catalysed reaction is a 1,2-diacyl-sn-glycero-3-phosphoethanolamine + S-adenosyl-L-methionine = a 1,2-diacyl-sn-glycero-3-phospho-N-methylethanolamine + S-adenosyl-L-homocysteine + H(+). It carries out the reaction 1,2-di-(9Z-octadecenoyl)-sn-glycero-3-phosphoethanolamine + S-adenosyl-L-methionine = 1,2-di-(9Z-octadecenoyl)-sn-glycero-3-phospho-N-methylethanolamine + S-adenosyl-L-homocysteine + H(+). The enzyme catalyses 1,2-di-(9Z-octadecenoyl)-sn-glycero-3-phospho-N-methylethanolamine + S-adenosyl-L-methionine = 1,2-di-(9Z-octadecenoyl)-sn-glycero-3-phospho-N,N-dimethylethanolamine + S-adenosyl-L-homocysteine + H(+). It catalyses the reaction 1,2-di-(9Z-octadecenoyl)-sn-glycero-3-phospho-N,N-dimethylethanolamine + S-adenosyl-L-methionine = 1,2-di-(9Z-octadecenoyl)-sn-glycero-3-phosphocholine + S-adenosyl-L-homocysteine + H(+). The catalysed reaction is 1,2-di-(9Z,12Z-octadecadienoyl)-sn-glycero-3-phosphoethanolamine + S-adenosyl-L-methionine = 1,2-di-(9Z,12Z-octadecadienoyl)-sn-glycero-3-phospho-N-methylethanolamine + S-adenosyl-L-homocysteine + H(+). It carries out the reaction 1,2-di-(9Z,12Z-octadecadienoyl)-sn-glycero-3-phospho-N-methylethanolamine + S-adenosyl-L-methionine = 1,2-di-(9Z,12Z-octadecadienoyl)-sn-glycero-3-phospho-N,N-dimethylethanolamine + S-adenosyl-L-homocysteine + H(+). The enzyme catalyses 1,2-di-(9Z,12Z-octadecadienoyl)-sn-glycero-3-phospho-N,N-dimethylethanolamine + S-adenosyl-L-methionine = 1,2-di-(9Z,12Z-octadecadienoyl)-sn-glycero-3-phosphocholine + S-adenosyl-L-homocysteine + H(+). It catalyses the reaction 1,2-di-(9Z,12Z,15Z-octadecatrienoyl)-sn-glycero-3-phosphoethanolamine + S-adenosyl-L-methionine = 1,2-di-(9Z,12Z,15Z-octadecatrienoyl)-sn-glycero-3-phospho-N-methylethanolamine + S-adenosyl-L-homocysteine + H(+). The catalysed reaction is 1,2-di-(9Z,12Z,15Z-octadecatrienoyl)-sn-glycero-3-phospho-N-methylethanolamine + S-adenosyl-L-methionine = 1,2-di-(9Z,12Z,15Z-octadecatrienoyl)-sn-glycero-3-phospho-N,N-dimethylethanolamine + S-adenosyl-L-homocysteine + H(+). It carries out the reaction 1,2-di-(9Z,12Z,15Z-octadecatrienoyl)-sn-glycero-3-phospho-N,N-dimethylethanolamine + S-adenosyl-L-methionine = 1,2-di-(9Z,12Z,15Z-octadecatrienoyl)-sn-glycero-3-phosphocholine + S-adenosyl-L-homocysteine + H(+). The enzyme catalyses 1-hexadecanoyl-2-(4Z,7Z,10Z,13Z,16Z,19Z-docosahexaenoyl)-sn-glycero-3-phosphoethanolamine + S-adenosyl-L-methionine = 1-hexadecanoyl-2-(4Z,7Z,10Z,13Z,16Z,19Z-docosahexaenoyl)-sn-glycero-3-phospho-N-methylethanolamine + S-adenosyl-L-homocysteine + H(+). It catalyses the reaction 1-hexadecanoyl-2-(4Z,7Z,10Z,13Z,16Z,19Z-docosahexaenoyl)-sn-glycero-3-phospho-N-methylethanolamine + S-adenosyl-L-methionine = 1-hexadecanoyl-2-(4Z,7Z,10Z,13Z,16Z,19Z-docosahexaenoyl)-sn-glycero-3-phospho-N,N-dimethylethanolamine + S-adenosyl-L-homocysteine + H(+). The catalysed reaction is 1-hexadecanoyl-2-(4Z,7Z,10Z,13Z,16Z,19Z-docosahexaenoyl)-sn-glycero-3-phospho-N,N-dimethylethanolamine + S-adenosyl-L-methionine = 1-hexadecanoyl-2-(4Z,7Z,10Z,13Z,16Z,19Z-docosahexaenoyl)-sn-glycero-3-phosphocholine + S-adenosyl-L-homocysteine + H(+). The protein operates within phospholipid metabolism; phosphatidylcholine biosynthesis. Catalyzes the three sequential steps of the methylation pathway for the biosynthesis of phosphatidylcholine, a critical and essential component for membrane structure. Uses S-adenosylmethionine (S-adenosyl-L-methionine, SAM or AdoMet) as the methyl group donor for the methylation of phosphatidylethanolamine (1,2-diacyl-sn-glycero-3-phosphoethanolamine, PE) to phosphatidylmonomethylethanolamine (1,2-diacyl-sn-glycero-3-phospho-N-methylethanolamine, PMME), PMME to phosphatidyldimethylethanolamine (1,2-diacyl-sn-glycero-3-phospho-N,N-dimethylethanolamine, PDME), and PDME to phosphatidylcholine (1,2-diacyl-sn-glycero-3-phosphocholine, PC), producing S-adenosyl-L-homocysteine in each step. The chain is Phosphatidylethanolamine N-methyltransferase from Mus musculus (Mouse).